A 281-amino-acid chain; its full sequence is Probable protein phosphatase 2C 9 (281 aa).

One can recognise a PPM-type phosphatase domain in the interval 33–280 (KYGFSLVKGK…DDISCVVVRF (248 aa)). Residues Asp70, Gly71, Asp232, and Asp271 each contribute to the Mn(2+) site.

Belongs to the PP2C family. Interacts with phytochromes (via N-terminus). Requires Mg(2+) as cofactor. Mn(2+) is required as a cofactor.

It is found in the nucleus. It carries out the reaction O-phospho-L-seryl-[protein] + H2O = L-seryl-[protein] + phosphate. The enzyme catalyses O-phospho-L-threonyl-[protein] + H2O = L-threonyl-[protein] + phosphate. Functionally, involved in the regulation of phytochrome signaling. May regulate phytochrome-interacting factor 3 (PIF3) through the dephosphorylation of phytochrome. This Arabidopsis thaliana (Mouse-ear cress) protein is Probable protein phosphatase 2C 9.